The chain runs to 423 residues: D-threonate kinase (423 aa).

Substrate is bound by residues D9, R51, and 81-84 (KIDS). ATP is bound by residues S245, 355–358 (GGDI), and G401.

The protein belongs to the four-carbon acid sugar kinase family.

The catalysed reaction is D-threonate + ATP = 4-O-phospho-D-threonate + ADP + H(+). Catalyzes the ATP-dependent phosphorylation of D-threonate to D-threonate 4-phosphate. Can also phosphorylate 4-hydroxy-L-threonine, with lower efficiency. This side reaction may serve to deal with the toxicity of 4-hydroxy-L-threonine by converting it into 4-hydroxy-L-threonine 4-phosphate, a useful product that can be used by PdxA2. The sequence is that of D-threonate kinase from Salmonella typhimurium (strain LT2 / SGSC1412 / ATCC 700720).